The sequence spans 375 residues: MQKLAVYVYIYLFVQISVDPVALDGSSQPTENTEKDGLCNACTWRQNTKSSRIEAIKIQILSKLRLEQAPNISRDVIKQLLPKAPPLQELIDQYDVQRDDSSDGSLEDDDYHATTETIITMPTESDFLVQMEGKPKCCFFKFSSKIQYNKVVKAQLWIYLRQVQKPTTVFVQILRLIKPMKDGTRYTGIRSLKLDMNPGNGIWQSIDVKTVLQNWLKQPESNLGIEIKAFDENGRDLAVTFPGPGEDGSNPFLEVRVTDTPKRSRRDFGLDCDEHSTESRCCRYPLTVDFEAFGWDWIIAPKRYKANYCSGECEFVFLQKYPHTHLVHQANPRGSAGPCCTPTKMSPINMLYFNGKEQIIYGKIPAMVVDRCGCS.

The first 23 residues, 1–23 (MQKLAVYVYIYLFVQISVDPVAL), serve as a signal peptide directing secretion. Positions 24–266 (DGSSQPTENT…VTDTPKRSRR (243 aa)) are excised as a propeptide. Asn-71 is a glycosylation site (N-linked (GlcNAc...) asparagine). Intrachain disulfides connect Cys-272/Cys-282, Cys-281/Cys-340, Cys-309/Cys-372, and Cys-313/Cys-374.

It belongs to the TGF-beta family. Homodimer; disulfide-linked.

It is found in the secreted. In terms of biological role, acts specifically as a negative regulator of skeletal muscle growth. The chain is Growth/differentiation factor 8 (MSTN) from Excalfactoria chinensis (Blue-breasted quail).